The sequence spans 553 residues: Arginine--tRNA ligase (553 aa).

Residues 132 to 140 (PTGDLHIGH) carry the 'HIGH' region motif.

It belongs to the class-I aminoacyl-tRNA synthetase family. Monomer.

It is found in the cytoplasm. The enzyme catalyses tRNA(Arg) + L-arginine + ATP = L-arginyl-tRNA(Arg) + AMP + diphosphate. The sequence is that of Arginine--tRNA ligase from Staphylococcus aureus (strain N315).